A 149-amino-acid chain; its full sequence is D-aminoacyl-tRNA deacylase (149 aa).

Residues 137-138 (GP) carry the Gly-cisPro motif, important for rejection of L-amino acids motif.

It belongs to the DTD family. Homodimer.

It localises to the cytoplasm. It carries out the reaction glycyl-tRNA(Ala) + H2O = tRNA(Ala) + glycine + H(+). The enzyme catalyses a D-aminoacyl-tRNA + H2O = a tRNA + a D-alpha-amino acid + H(+). Functionally, an aminoacyl-tRNA editing enzyme that deacylates mischarged D-aminoacyl-tRNAs. Also deacylates mischarged glycyl-tRNA(Ala), protecting cells against glycine mischarging by AlaRS. Acts via tRNA-based rather than protein-based catalysis; rejects L-amino acids rather than detecting D-amino acids in the active site. By recycling D-aminoacyl-tRNA to D-amino acids and free tRNA molecules, this enzyme counteracts the toxicity associated with the formation of D-aminoacyl-tRNA entities in vivo and helps enforce protein L-homochirality. The polypeptide is D-aminoacyl-tRNA deacylase (Halothermothrix orenii (strain H 168 / OCM 544 / DSM 9562)).